The primary structure comprises 603 residues: ATP-dependent lipid A-core flippase (603 aa).

4 consecutive transmembrane segments (helical) span residues 20 to 40, 79 to 99, 170 to 190, and 269 to 289; these read LGYV…FLIF, LVYA…LGSF, VFLF…MLAI, and PMLQ…VLWL. The region spanning 31–324 is the ABC transmembrane type-1 domain; it reads LLSIVGFLIF…LSEVSSTVQR (294 aa). Residues 356–592 form the ABC transporter domain; it reads LEVRNLSFRY…NGHYARLHAM (237 aa). 390–397 contacts ATP; the sequence is GRSGSGKS.

Belongs to the ABC transporter superfamily. Lipid exporter (TC 3.A.1.106) family. Homodimer.

The protein localises to the cell inner membrane. The enzyme catalyses ATP + H2O + lipid A-core oligosaccharideSide 1 = ADP + phosphate + lipid A-core oligosaccharideSide 2.. In terms of biological role, involved in lipopolysaccharide (LPS) biosynthesis. Translocates lipid A-core from the inner to the outer leaflet of the inner membrane. Transmembrane domains (TMD) form a pore in the inner membrane and the ATP-binding domain (NBD) is responsible for energy generation. The sequence is that of ATP-dependent lipid A-core flippase from Pseudomonas aeruginosa (strain ATCC 15692 / DSM 22644 / CIP 104116 / JCM 14847 / LMG 12228 / 1C / PRS 101 / PAO1).